Consider the following 131-residue polypeptide: Large ribosomal subunit protein uL14m (131 aa).

Belongs to the universal ribosomal protein uL14 family. As to quaternary structure, component of the mitochondrial large ribosomal subunit (mt-LSU). Mature N.crassa 74S mitochondrial ribosomes consist of a small (37S) and a large (54S) subunit. The 37S small subunit contains a 16S ribosomal RNA (16S mt-rRNA) and 32 different proteins. The 54S large subunit contains a 23S rRNA (23S mt-rRNA) and 42 different proteins.

The protein resides in the mitochondrion. In terms of biological role, component of the mitochondrial ribosome (mitoribosome), a dedicated translation machinery responsible for the synthesis of mitochondrial genome-encoded proteins, including at least some of the essential transmembrane subunits of the mitochondrial respiratory chain. The mitoribosomes are attached to the mitochondrial inner membrane and translation products are cotranslationally integrated into the membrane. The chain is Large ribosomal subunit protein uL14m (mrpl38) from Neurospora crassa (strain ATCC 24698 / 74-OR23-1A / CBS 708.71 / DSM 1257 / FGSC 987).